Reading from the N-terminus, the 289-residue chain is Serine/threonine-protein phosphatase Pgam5, mitochondrial (289 aa).

A helical transmembrane segment spans residues Phe-7–Leu-23.

It belongs to the phosphoglycerate mutase family. BPG-dependent PGAM subfamily. Interacts with Pk92B/ASK1.

Its subcellular location is the mitochondrion outer membrane. It catalyses the reaction O-phospho-L-seryl-[protein] + H2O = L-seryl-[protein] + phosphate. The enzyme catalyses O-phospho-L-threonyl-[protein] + H2O = L-threonyl-[protein] + phosphate. Functionally, displays phosphatase activity for serine/threonine residues, and dephosphorylates and activates Pk92B kinase. Has apparently no phosphoglycerate mutase activity. The polypeptide is Serine/threonine-protein phosphatase Pgam5, mitochondrial (Drosophila persimilis (Fruit fly)).